Reading from the N-terminus, the 439-residue chain is Kinesin-like protein KIN-13 (439 aa).

Residue 1–5 (GSGKS) coordinates ATP. One can recognise a Kinesin motor domain in the interval 1 to 240 (GSGKSFTMMH…LRYADRVKEL (240 aa)).

The protein belongs to the TRAFAC class myosin-kinesin ATPase superfamily. Kinesin family. KIN-13 subfamily. Interacts with PLK. In terms of processing, phosphorylated by PLK.

The protein resides in the cytoplasm. It localises to the cytoskeleton. It is found in the cell projection. Its subcellular location is the cilium. The protein localises to the flagellum. The protein resides in the flagellum basal body. It localises to the flagellum axoneme. It is found in the spindle. Its subcellular location is the chromosome. The protein localises to the centromere. The protein resides in the kinetochore. Its function is as follows. Involved in cell cycle. Involved in formation of flagella, regulation of flagellar length, and formation of median bodies during interphase. Regulates flagellar length in all eight distal flagellar tips by promoting disassembly of the microtubules. Disassembles microtubules at the distal flagellar tips in a length-dependent manner in order to maintain different equilibrium lengths of the four flagellar pairs. Regulates interphase and mitotic microtubule dynamics. Regulates microtubule disassembly dynamics of the dual mitotic spindles and the median body. The protein is Kinesin-like protein KIN-13 of Giardia intestinalis (Giardia lamblia).